The following is a 128-amino-acid chain: NADH dehydrogenase [ubiquinone] 1 beta subcomplex subunit 6 (128 aa).

At threonine 2 the chain carries N-acetylthreonine. Lysine 24 carries the post-translational modification N6-acetyllysine. The chain crosses the membrane as a helical span at residues 68-86 (SIFVFTHVLVPVWIIHYYM).

This sequence belongs to the complex I NDUFB6 subunit family. Complex I is composed of 45 different subunits.

Its subcellular location is the mitochondrion inner membrane. Accessory subunit of the mitochondrial membrane respiratory chain NADH dehydrogenase (Complex I), that is believed not to be involved in catalysis. Complex I functions in the transfer of electrons from NADH to the respiratory chain. The immediate electron acceptor for the enzyme is believed to be ubiquinone. This is NADH dehydrogenase [ubiquinone] 1 beta subcomplex subunit 6 (NDUFB6) from Pan troglodytes (Chimpanzee).